We begin with the raw amino-acid sequence, 913 residues long: Protein translocase subunit SecA (913 aa).

ATP contacts are provided by residues glutamine 87, 105 to 109, and aspartate 517; that span reads GEGKT. Disordered stretches follow at residues 568 to 588 and 871 to 913; these read ESRR…DPGS and EVAV…GKLS. Positions 897, 899, 908, and 909 each coordinate Zn(2+). Residues 903 to 913 are compositionally biased toward basic residues; it reads KKYKQCHGKLS.

Belongs to the SecA family. In terms of assembly, monomer and homodimer. Part of the essential Sec protein translocation apparatus which comprises SecA, SecYEG and auxiliary proteins SecDF-YajC and YidC. Zn(2+) serves as cofactor.

The protein resides in the cell inner membrane. The protein localises to the cytoplasm. The catalysed reaction is ATP + H2O + cellular proteinSide 1 = ADP + phosphate + cellular proteinSide 2.. Part of the Sec protein translocase complex. Interacts with the SecYEG preprotein conducting channel. Has a central role in coupling the hydrolysis of ATP to the transfer of proteins into and across the cell membrane, serving both as a receptor for the preprotein-SecB complex and as an ATP-driven molecular motor driving the stepwise translocation of polypeptide chains across the membrane. The protein is Protein translocase subunit SecA of Coxiella burnetii (strain RSA 493 / Nine Mile phase I).